The primary structure comprises 433 residues: Zuotin (433 aa).

Position 50 is a phosphoserine (serine 50). Positions 98-170 (LYAAMGLSKL…RAQYDSCDFV (73 aa)) constitute a J domain. A compositionally biased stretch (basic and acidic residues) spans 292 to 330 (EEKKEKERRKWEREAGARAEAEAKAKAEAEAKAKAESEA). The disordered stretch occupies residues 292 to 357 (EEKKEKERRK…KAAKKKNKRA (66 aa)).

As to quaternary structure, RAC is a heterodimer of the Hsp70/DnaK-type chaperone SSZ1 and the Hsp40/DnaJ-type chaperone ZUO1. RAC associates with ribosomes via ZUO1.

It localises to the cytoplasm. In terms of biological role, component of the ribosome-associated complex (RAC), a heterodimeric chaperone complex involved in regulation of accurate translation termination and in folding or maintaining nascent polypeptides in a folding-competent state. RAC stimulates the ATPase activity of the ribosome-associated pool of Hsp70-type chaperones SSB1/SSB2 that bind to the nascent polypeptide chain. ZUO1 can act as a J-protein for SSB1/SSB2 only when associated with SSZ1. This Saccharomyces cerevisiae (strain ATCC 204508 / S288c) (Baker's yeast) protein is Zuotin (ZUO1).